The primary structure comprises 373 residues: Transaldolase (373 aa).

Residue Lys143 is the Schiff-base intermediate with substrate of the active site.

It belongs to the transaldolase family. Type 2 subfamily.

Its subcellular location is the cytoplasm. It carries out the reaction D-sedoheptulose 7-phosphate + D-glyceraldehyde 3-phosphate = D-erythrose 4-phosphate + beta-D-fructose 6-phosphate. It participates in carbohydrate degradation; pentose phosphate pathway; D-glyceraldehyde 3-phosphate and beta-D-fructose 6-phosphate from D-ribose 5-phosphate and D-xylulose 5-phosphate (non-oxidative stage): step 2/3. Transaldolase is important for the balance of metabolites in the pentose-phosphate pathway. In Mycobacterium marinum (strain ATCC BAA-535 / M), this protein is Transaldolase.